The following is a 271-amino-acid chain: Phosphatidylglycerol--prolipoprotein diacylglyceryl transferase (271 aa).

Transmembrane regions (helical) follow at residues Trp25–Val45, Tyr60–Tyr80, Phe103–Leu123, and Ala131–Gly151. Arg152 contacts a 1,2-diacyl-sn-glycero-3-phospho-(1'-sn-glycerol). 3 helical membrane-spanning segments follow: residues Pro181–Ala201, Gly209–Tyr229, and Gly235–Ile255.

It belongs to the Lgt family.

The protein resides in the cell inner membrane. It catalyses the reaction L-cysteinyl-[prolipoprotein] + a 1,2-diacyl-sn-glycero-3-phospho-(1'-sn-glycerol) = an S-1,2-diacyl-sn-glyceryl-L-cysteinyl-[prolipoprotein] + sn-glycerol 1-phosphate + H(+). Its pathway is protein modification; lipoprotein biosynthesis (diacylglyceryl transfer). In terms of biological role, catalyzes the transfer of the diacylglyceryl group from phosphatidylglycerol to the sulfhydryl group of the N-terminal cysteine of a prolipoprotein, the first step in the formation of mature lipoproteins. The chain is Phosphatidylglycerol--prolipoprotein diacylglyceryl transferase from Campylobacter jejuni (strain RM1221).